Consider the following 504-residue polypeptide: Cytochrome P450 4A24 (504 aa).

Transmembrane regions (helical) follow at residues Leu-6–Leu-26 and Val-112–Thr-132. Cys-451 provides a ligand contact to heme.

This sequence belongs to the cytochrome P450 family. The cofactor is heme.

It is found in the endoplasmic reticulum membrane. It catalyses the reaction an omega-methyl-long-chain fatty acid + reduced [NADPH--hemoprotein reductase] + O2 = an omega-hydroxy-long-chain fatty acid + oxidized [NADPH--hemoprotein reductase] + H2O + H(+). In terms of biological role, catalyzes the omega- and (omega-1)-hydroxylation of various fatty acids such as laurate and palmitate. Has no activity toward taurochenodeoxycholic acid. This is Cytochrome P450 4A24 (CYP4A24) from Sus scrofa (Pig).